We begin with the raw amino-acid sequence, 277 residues long: Ribosomal RNA small subunit methyltransferase A (277 aa).

S-adenosyl-L-methionine contacts are provided by N20, L22, G47, E68, D93, and N114.

This sequence belongs to the class I-like SAM-binding methyltransferase superfamily. rRNA adenine N(6)-methyltransferase family. RsmA subfamily.

The protein resides in the cytoplasm. The enzyme catalyses adenosine(1518)/adenosine(1519) in 16S rRNA + 4 S-adenosyl-L-methionine = N(6)-dimethyladenosine(1518)/N(6)-dimethyladenosine(1519) in 16S rRNA + 4 S-adenosyl-L-homocysteine + 4 H(+). Functionally, specifically dimethylates two adjacent adenosines (A1518 and A1519) in the loop of a conserved hairpin near the 3'-end of 16S rRNA in the 30S particle. May play a critical role in biogenesis of 30S subunits. This is Ribosomal RNA small subunit methyltransferase A from Aliivibrio salmonicida (strain LFI1238) (Vibrio salmonicida (strain LFI1238)).